The following is a 289-amino-acid chain: Pseudouridine-5'-phosphate glycosidase (289 aa).

Glu-10 (proton donor) is an active-site residue. Substrate contacts are provided by Lys-71 and Val-91. Asp-121 contributes to the Mn(2+) binding site. 123 to 125 provides a ligand contact to substrate; that stretch reads SQD. Lys-142 serves as the catalytic Nucleophile.

This sequence belongs to the pseudouridine-5'-phosphate glycosidase family. Homotrimer. The cofactor is Mn(2+).

The catalysed reaction is D-ribose 5-phosphate + uracil = psi-UMP + H2O. Functionally, catalyzes the reversible cleavage of pseudouridine 5'-phosphate (PsiMP) to ribose 5-phosphate and uracil. Functions biologically in the cleavage direction, as part of a pseudouridine degradation pathway. The sequence is that of Pseudouridine-5'-phosphate glycosidase from Kosmotoga olearia (strain ATCC BAA-1733 / DSM 21960 / TBF 19.5.1).